A 546-amino-acid chain; its full sequence is Fusion glycoprotein F0 (546 aa).

An N-terminal signal peptide occupies residues 1 to 19 (MGILFAALLAMTNPHLATG). The Extracellular portion of the chain corresponds to 20–491 (QIHWGNLSKI…NIKGVSVTNT (472 aa)). N-linked (GlcNAc...) asparagine; by host glycans are attached at residues Asn-25, Asn-57, and Asn-63. Residues 109 to 133 (FAGVVLAGAALGVATAAQITAGIAL) form a fusion peptide region. Residues 134-162 (HQSMMNSQAIESLKASLETTNQAIEEIRQ) are a coiled coil. Cystine bridges form between Cys-330/Cys-339, Cys-354/Cys-362, Cys-386/Cys-391, and Cys-393/Cys-416. Positions 458 to 483 (NLWNAVTKLEKAKDLLDSSDLILENI) form a coiled coil. Residues 492-512 (GYILVGVGLIAVVGILIITCC) traverse the membrane as a helical segment. Topologically, residues 513 to 546 (CKKRRTDNKVSTMVLNPGLRPDLTGTSKSYVRSL) are cytoplasmic.

Belongs to the paramyxoviruses fusion glycoprotein family. Homotrimer of disulfide-linked F1-F2. In terms of processing, the inactive precursor F0 is glycosylated and proteolytically cleaved into F1 and F2 to be functionally active. The cleavage is mediated by cellular proteases during the transport and maturation of the polypeptide.

Its subcellular location is the virion membrane. The protein resides in the host cell membrane. Class I viral fusion protein. Under the current model, the protein has at least 3 conformational states: pre-fusion native state, pre-hairpin intermediate state, and post-fusion hairpin state. During viral and plasma cell membrane fusion, the heptad repeat (HR) regions assume a trimer-of-hairpins structure, positioning the fusion peptide in close proximity to the C-terminal region of the ectodomain. The formation of this structure appears to drive apposition and subsequent fusion of viral and plasma cell membranes. Directs fusion of viral and cellular membranes leading to delivery of the nucleocapsid into the cytoplasm. This fusion is pH independent and occurs directly at the outer cell membrane. The trimer of F1-F2 (F protein) probably interacts with HN at the virion surface. Upon HN binding to its cellular receptor, the hydrophobic fusion peptide is unmasked and interacts with the cellular membrane, inducing the fusion between cell and virion membranes. Later in infection, F proteins expressed at the plasma membrane of infected cells could mediate fusion with adjacent cells to form syncytia, a cytopathic effect that could lead to tissue necrosis. This chain is Fusion glycoprotein F0 (F), found in Bos indicus (Zebu).